The chain runs to 427 residues: DEAD-box ATP-dependent RNA helicase 56 (427 aa).

The segment at 1–30 is disordered; that stretch reads MGDARDNEAYEEELLDYEEEDEKVPDSGNK. The span at 9–23 shows a compositional bias: acidic residues; the sequence is AYEEELLDYEEEDEK. The Q motif motif lies at 46 to 74; it reads SGFRDFLLKPELLRAIVDSGFEHPSEVQH. The region spanning 77-250 is the Helicase ATP-binding domain; that stretch reads IPQAILGMDV…KKFMQDPMEI (174 aa). 90–97 lines the ATP pocket; that stretch reads AKSGMGKT. Positions 197 to 200 match the DECD box motif; sequence DECD. Positions 278-423 constitute a Helicase C-terminal domain; sequence KLNDLLDALD…ELPEQIDTST (146 aa).

This sequence belongs to the DEAD box helicase family. DECD subfamily. In terms of assembly, interacts with ALY2 and MOS11.

Its subcellular location is the nucleus. The catalysed reaction is ATP + H2O = ADP + phosphate + H(+). Functionally, ATP-dependent RNA helicase involved in pre-mRNA splicing. Required for the export of mRNA out of the nucleus. In addition to ssRNA and dsRNA, binds dsDNA, but not ssDNA. The sequence is that of DEAD-box ATP-dependent RNA helicase 56 (RH56) from Arabidopsis thaliana (Mouse-ear cress).